A 253-amino-acid polypeptide reads, in one-letter code: Phosphonates import ATP-binding protein PhnC (253 aa).

An ABC transporter domain is found at 4-247 (VRFEGVTKRF…QAVAMIYRAG (244 aa)). Position 36–43 (36–43 (GLSGSGKS)) interacts with ATP.

This sequence belongs to the ABC transporter superfamily. Phosphonates importer (TC 3.A.1.9.1) family. In terms of assembly, the complex is composed of two ATP-binding proteins (PhnC), two transmembrane proteins (PhnE) and a solute-binding protein (PhnD).

Its subcellular location is the cell membrane. The catalysed reaction is phosphonate(out) + ATP + H2O = phosphonate(in) + ADP + phosphate + H(+). Its function is as follows. Part of the ABC transporter complex PhnCDE involved in phosphonates import. Responsible for energy coupling to the transport system. The protein is Phosphonates import ATP-binding protein PhnC of Frankia casuarinae (strain DSM 45818 / CECT 9043 / HFP020203 / CcI3).